Consider the following 70-residue polypeptide: MKPGIHPEYAEITATCTCGNVIKVNSTAGKSLHLDVCGACHPFYTGTQKIVDTGGRIDKFNKRFGALGKK.

The Zn(2+) site is built by cysteine 16, cysteine 18, cysteine 37, and cysteine 40.

The protein belongs to the bacterial ribosomal protein bL31 family. Type A subfamily. Part of the 50S ribosomal subunit. Zn(2+) is required as a cofactor.

Functionally, binds the 23S rRNA. The polypeptide is Large ribosomal subunit protein bL31 (Shewanella woodyi (strain ATCC 51908 / MS32)).